A 60-amino-acid chain; its full sequence is MRKLRGGQTKETRKQKQERREENLKIQQQLKTIVLPICGVFLMCIVVYVFLKTRPRFEEL.

The tract at residues 1–21 is disordered; sequence MRKLRGGQTKETRKQKQERRE. The span at 8–21 shows a compositional bias: basic and acidic residues; sequence QTKETRKQKQERRE. Residues 10–33 are a coiled coil; the sequence is KETRKQKQERREENLKIQQQLKTI. A helical membrane pass occupies residues 32-52; it reads TIVLPICGVFLMCIVVYVFLK.

This sequence belongs to the SMCO4 family.

It localises to the membrane. The polypeptide is Single-pass membrane and coiled-coil domain-containing protein 4 homolog (Aedes aegypti (Yellowfever mosquito)).